Consider the following 312-residue polypeptide: Homoserine O-acetyltransferase (312 aa).

The Acyl-thioester intermediate role is filled by Cys142. Substrate is bound by residues Lys163 and Ser192. His235 (proton acceptor) is an active-site residue. Glu237 is a catalytic residue. Arg249 serves as a coordination point for substrate.

It belongs to the MetA family.

Its subcellular location is the cytoplasm. It carries out the reaction L-homoserine + acetyl-CoA = O-acetyl-L-homoserine + CoA. It functions in the pathway amino-acid biosynthesis; L-methionine biosynthesis via de novo pathway; O-acetyl-L-homoserine from L-homoserine: step 1/1. Its function is as follows. Transfers an acetyl group from acetyl-CoA to L-homoserine, forming acetyl-L-homoserine. This Ruegeria sp. (strain TM1040) (Silicibacter sp.) protein is Homoserine O-acetyltransferase.